Consider the following 598-residue polypeptide: Phospholipase B-like protein G (598 aa).

Residues Met-1–Cys-24 form the signal peptide. Asn-50, Asn-98, Asn-173, Asn-341, Asn-368, Asn-450, Asn-480, Asn-526, and Asn-576 each carry an N-linked (GlcNAc...) asparagine glycan.

The protein belongs to the phospholipase B-like family.

Its subcellular location is the secreted. Functionally, probable phospholipase. The polypeptide is Phospholipase B-like protein G (plbG) (Dictyostelium discoideum (Social amoeba)).